The primary structure comprises 299 residues: Ribonuclease H2 subunit A (299 aa).

M1 is modified (N-acetylmethionine). The RNase H type-2 domain occupies 28-251 (PCVLGVDEAG…AQSILESEAE (224 aa)). Residues D34, E35, and D142 each coordinate a divalent metal cation. T205 and T217 each carry phosphothreonine. Residues 250 to 272 (AEDVKWEDSETGDPKGPGKIKSY) are disordered. S258 is modified (phosphoserine).

It belongs to the RNase HII family. Eukaryotic subfamily. The RNase H2 complex is a heterotrimer composed of the catalytic subunit RNASEH2A and the non-catalytic subunits RNASEH2B and RNASEH2C. Requires Mn(2+) as cofactor. Mg(2+) serves as cofactor.

It is found in the nucleus. The catalysed reaction is Endonucleolytic cleavage to 5'-phosphomonoester.. Catalytic subunit of RNase HII, an endonuclease that specifically degrades the RNA of RNA:DNA hybrids. Participates in DNA replication, possibly by mediating the removal of lagging-strand Okazaki fragment RNA primers during DNA replication. Mediates the excision of single ribonucleotides from DNA:RNA duplexes. In Bos taurus (Bovine), this protein is Ribonuclease H2 subunit A (RNASEH2A).